Consider the following 235-residue polypeptide: LexA repressor (235 aa).

The H-T-H motif DNA-binding region spans 47–67 (IREIADAVGLTSTSSVAHQLR). Residues Ser159 and Lys196 each act as for autocatalytic cleavage activity in the active site.

This sequence belongs to the peptidase S24 family. As to quaternary structure, homodimer.

The enzyme catalyses Hydrolysis of Ala-|-Gly bond in repressor LexA.. In terms of biological role, represses a number of genes involved in the response to DNA damage (SOS response), including recA and lexA. In the presence of single-stranded DNA, RecA interacts with LexA causing an autocatalytic cleavage which disrupts the DNA-binding part of LexA, leading to derepression of the SOS regulon and eventually DNA repair. This chain is LexA repressor, found in Mycobacterium leprae (strain Br4923).